The chain runs to 360 residues: MNAPLCGIWLWLPLLLTWLTPEVSSSWWYMRATSGSSRVMCDNVPGLVSRQRQLCHRHPDVMRAIGLGVAEWTAECQHQFRQHRWNCNTLDRDHSLFGRVLLRSSRESAFVYAISSAGVVFAITRACSQGELKSCSCDPKKKGTAKDSKGTFDWGGCSDNIDYGIKFARAFVDAKERKGKDARALMNLHNNRAGRKAVKRFLKQECKCHGVSGSCTLRTCWLAMADFRKTGSYLWRKYNGAIQVVMNQDGTGFTVANKRFKKPTKNDLVYFENSPDYCIRDREAGSLGTAGRVCNLTSRGMDSCEVMCCGRGYDTSRVTRMTKCECKFHWCCAVRCQDCLEALDVHTCKAPKNADWTTPT.

A signal peptide spans 1-25 (MNAPLCGIWLWLPLLLTWLTPEVSS). 11 disulfide bridges follow: cysteine 76–cysteine 87, cysteine 127–cysteine 135, cysteine 137–cysteine 157, cysteine 206–cysteine 220, cysteine 208–cysteine 215, cysteine 278–cysteine 309, cysteine 294–cysteine 304, cysteine 308–cysteine 348, cysteine 324–cysteine 339, cysteine 326–cysteine 336, and cysteine 331–cysteine 332. Serine 212 is lipidated: O-palmitoleoyl serine; by PORCN. Asparagine 295 carries an N-linked (GlcNAc...) asparagine glycan.

Belongs to the Wnt family. Post-translationally, palmitoleoylation is required for efficient binding to frizzled receptors. Depalmitoleoylation leads to Wnt signaling pathway inhibition.

It localises to the secreted. It is found in the extracellular space. The protein localises to the extracellular matrix. Its function is as follows. Ligand for members of the frizzled family of seven transmembrane receptors. Functions in the canonical Wnt signaling pathway that results in activation of transcription factors of the TCF/LEF family. Functions as a upstream regulator of FGF10 expression. Plays an important role in embryonic lung development. May contribute to embryonic brain development by regulating the proliferation of dopaminergic precursors and neurons. In Otolemur garnettii (Small-eared galago), this protein is Protein Wnt-2 (WNT2).